Reading from the N-terminus, the 171-residue chain is ATP synthase subunit b (171 aa).

Residues 2-22 (VLVKMALGFLILLSPLCAMEL) traverse the membrane as a helical segment.

This sequence belongs to the ATPase B chain family. As to quaternary structure, F-type ATPases have 2 components, F(1) - the catalytic core - and F(0) - the membrane proton channel. F(1) has five subunits: alpha(3), beta(3), gamma(1), delta(1), epsilon(1). F(0) has three main subunits: a(1), b(2) and c(10-14). The alpha and beta chains form an alternating ring which encloses part of the gamma chain. F(1) is attached to F(0) by a central stalk formed by the gamma and epsilon chains, while a peripheral stalk is formed by the delta and b chains.

It is found in the cell inner membrane. In terms of biological role, f(1)F(0) ATP synthase produces ATP from ADP in the presence of a proton or sodium gradient. F-type ATPases consist of two structural domains, F(1) containing the extramembraneous catalytic core and F(0) containing the membrane proton channel, linked together by a central stalk and a peripheral stalk. During catalysis, ATP synthesis in the catalytic domain of F(1) is coupled via a rotary mechanism of the central stalk subunits to proton translocation. Its function is as follows. Component of the F(0) channel, it forms part of the peripheral stalk, linking F(1) to F(0). In Helicobacter acinonychis (strain Sheeba), this protein is ATP synthase subunit b.